The following is a 54-amino-acid chain: Insulin (54 aa).

3 disulfide bridges follow: cysteine 7–cysteine 39, cysteine 19–cysteine 52, and cysteine 38–cysteine 43.

This sequence belongs to the insulin family. Heterodimer of a B chain and an A chain linked by two disulfide bonds.

It localises to the secreted. In terms of biological role, insulin decreases blood glucose concentration. It increases cell permeability to monosaccharides, amino acids and fatty acids. It accelerates glycolysis, the pentose phosphate cycle, and glycogen synthesis in liver. The polypeptide is Insulin (ins) (Squalus acanthias (Spiny dogfish)).